The following is a 202-amino-acid chain: Small ribosomal subunit protein uS4 (202 aa).

Positions 15–42 (LGDLPGLTRKAAKRSYPPGQHGQARRKR) are disordered. Positions 90–152 (NRLDNVCFRL…KCSKQLAEGN (63 aa)) constitute an S4 RNA-binding domain.

It belongs to the universal ribosomal protein uS4 family. In terms of assembly, part of the 30S ribosomal subunit. Contacts protein S5. The interaction surface between S4 and S5 is involved in control of translational fidelity.

In terms of biological role, one of the primary rRNA binding proteins, it binds directly to 16S rRNA where it nucleates assembly of the body of the 30S subunit. Its function is as follows. With S5 and S12 plays an important role in translational accuracy. This Parasynechococcus marenigrum (strain WH8102) protein is Small ribosomal subunit protein uS4.